Here is a 65-residue protein sequence, read N- to C-terminus: Metallothionein-like protein 3B (65 aa).

This sequence belongs to the metallothionein superfamily. Type 15 family. As to expression, expressed in leaves and rachis.

Functionally, metallothioneins have a high content of cysteine residues that bind various heavy metals. The polypeptide is Metallothionein-like protein 3B (MT3B) (Oryza sativa subsp. japonica (Rice)).